A 247-amino-acid polypeptide reads, in one-letter code: Adenylyl-sulfate kinase (247 aa).

Residues 1-24 (MSQSNSDDSASSSTQQAGDGQDDV) are disordered. 55-62 (GLSGCGKS) is an ATP binding site. Ser-146 acts as the Phosphoserine intermediate in catalysis.

The protein belongs to the APS kinase family.

The enzyme catalyses adenosine 5'-phosphosulfate + ATP = 3'-phosphoadenylyl sulfate + ADP + H(+). It participates in sulfur metabolism; hydrogen sulfide biosynthesis; sulfite from sulfate: step 2/3. Its function is as follows. Catalyzes the synthesis of activated sulfate. This is Adenylyl-sulfate kinase from Rhodopirellula baltica (strain DSM 10527 / NCIMB 13988 / SH1).